We begin with the raw amino-acid sequence, 165 residues long: Protein SprT (165 aa).

A SprT-like domain is found at 20–163; sequence EKLAQANLKL…RCVHCGEQLV (144 aa). His-78 contacts Zn(2+). Glu-79 is a catalytic residue. A Zn(2+)-binding site is contributed by His-82.

Belongs to the SprT family. The cofactor is Zn(2+).

The protein localises to the cytoplasm. This Shigella sonnei (strain Ss046) protein is Protein SprT.